A 264-amino-acid chain; its full sequence is MDGLWVKCKQCQQILLTKELEKNLKVCRCGYHFRMTAQERIVMLVDENSFIEWDRELVSKDPLQFPGYAQKIQKCQIETSMSEAITTGQGRICDIPVVLGVMDPRFIMASMGAVVGEKIVRAAERALKLRLPLVLFSASGGARMQEGVLSLMQMARTSAALTRLSKAGLPFFSVLTDPTTGGVTASFAMLGDLIIAEPGALIGFTGPRVIEQTIRQKLPEGFQRSEFLQKHGMVDIIIERPKMREQLAALLALHCGNSLEGVES.

Residues 4–264 (LWVKCKQCQQ…CGNSLEGVES (261 aa)) form the CoA carboxyltransferase N-terminal domain. Cysteine 8, cysteine 11, cysteine 27, and cysteine 29 together coordinate Zn(2+). A C4-type zinc finger spans residues 8-29 (CKQCQQILLTKELEKNLKVCRC).

It belongs to the AccD/PCCB family. As to quaternary structure, acetyl-CoA carboxylase is a heterohexamer composed of biotin carboxyl carrier protein (AccB), biotin carboxylase (AccC) and two subunits each of ACCase subunit alpha (AccA) and ACCase subunit beta (AccD). Zn(2+) is required as a cofactor.

The protein localises to the cytoplasm. The catalysed reaction is N(6)-carboxybiotinyl-L-lysyl-[protein] + acetyl-CoA = N(6)-biotinyl-L-lysyl-[protein] + malonyl-CoA. Its pathway is lipid metabolism; malonyl-CoA biosynthesis; malonyl-CoA from acetyl-CoA: step 1/1. In terms of biological role, component of the acetyl coenzyme A carboxylase (ACC) complex. Biotin carboxylase (BC) catalyzes the carboxylation of biotin on its carrier protein (BCCP) and then the CO(2) group is transferred by the transcarboxylase to acetyl-CoA to form malonyl-CoA. This is Acetyl-coenzyme A carboxylase carboxyl transferase subunit beta from Heliobacterium modesticaldum (strain ATCC 51547 / Ice1).